Consider the following 210-residue polypeptide: Na(+)-translocating NADH-quinone reductase subunit D (210 aa).

6 helical membrane passes run 10–30 (VLIGPIVSNNPIALQILGVCS), 42–62 (LVMTIALTAVCALSNLFISLI), 72–92 (IIVQMTIIASLVIVVDQVLQA), 103–123 (VFVGLIITNCIVMGRAEAYAM), 131–151 (FMDGIGNGLGYGAILLSVGFV), and 178–198 (NGLLLLPPSAFFLIGALIWII).

Belongs to the NqrDE/RnfAE family. Composed of six subunits; NqrA, NqrB, NqrC, NqrD, NqrE and NqrF.

Its subcellular location is the cell inner membrane. The catalysed reaction is a ubiquinone + n Na(+)(in) + NADH + H(+) = a ubiquinol + n Na(+)(out) + NAD(+). Functionally, NQR complex catalyzes the reduction of ubiquinone-1 to ubiquinol by two successive reactions, coupled with the transport of Na(+) ions from the cytoplasm to the periplasm. NqrA to NqrE are probably involved in the second step, the conversion of ubisemiquinone to ubiquinol. The protein is Na(+)-translocating NADH-quinone reductase subunit D of Shewanella pealeana (strain ATCC 700345 / ANG-SQ1).